Consider the following 668-residue polypeptide: UvrABC system protein B (668 aa).

The 146-residue stretch at 25-170 (NSILLGNKYQ…FVGQKISIKE (146 aa)) folds into the Helicase ATP-binding domain. 38–45 (GVTGSGKT) provides a ligand contact to ATP. Positions 91 to 114 (YYDYYQPESYVPSKDLFIEKEATI) match the Beta-hairpin motif. In terms of domain architecture, Helicase C-terminal spans 429-595 (QMEDLYSEIQ…TIVKKIQNIL (167 aa)). Residues 622 to 657 (KKLIDKLKFDLEEAVNDERFEDAIVLRDKIKELSSK) enclose the UVR domain.

It belongs to the UvrB family. In terms of assembly, forms a heterotetramer with UvrA during the search for lesions. Interacts with UvrC in an incision complex.

It is found in the cytoplasm. Functionally, the UvrABC repair system catalyzes the recognition and processing of DNA lesions. A damage recognition complex composed of 2 UvrA and 2 UvrB subunits scans DNA for abnormalities. Upon binding of the UvrA(2)B(2) complex to a putative damaged site, the DNA wraps around one UvrB monomer. DNA wrap is dependent on ATP binding by UvrB and probably causes local melting of the DNA helix, facilitating insertion of UvrB beta-hairpin between the DNA strands. Then UvrB probes one DNA strand for the presence of a lesion. If a lesion is found the UvrA subunits dissociate and the UvrB-DNA preincision complex is formed. This complex is subsequently bound by UvrC and the second UvrB is released. If no lesion is found, the DNA wraps around the other UvrB subunit that will check the other stand for damage. The chain is UvrABC system protein B from Borreliella burgdorferi (strain ZS7) (Borrelia burgdorferi).